The chain runs to 89 residues: MALLDFFLSRKKNTANIAKERLQIIVAERRRGDAEPHYLPQLRKDILEVICKYVQIDPEMVSVQLEQRDGDISILELNVTLPETEESKS.

Belongs to the MinE family.

Functionally, prevents the cell division inhibition by proteins MinC and MinD at internal division sites while permitting inhibition at polar sites. This ensures cell division at the proper site by restricting the formation of a division septum at the midpoint of the long axis of the cell. This chain is Cell division topological specificity factor, found in Klebsiella pneumoniae subsp. pneumoniae (strain ATCC 700721 / MGH 78578).